Consider the following 362-residue polypeptide: NAD(P)H-quinone oxidoreductase subunit 1, chloroplastic (362 aa).

8 consecutive transmembrane segments (helical) span residues 29–49 (ILPI…IVWL), 103–123 (IAVI…HFVL), 128–148 (IGVF…LMAG), 164–184 (AAQS…ISLL), 202–222 (FFGW…ISSL), 247–267 (YSGI…LVSS), 303–323 (TIGI…SITI), and 335–355 (LLNL…LLTT).

It belongs to the complex I subunit 1 family. In terms of assembly, NDH is composed of at least 16 different subunits, 5 of which are encoded in the nucleus.

It is found in the plastid. Its subcellular location is the chloroplast thylakoid membrane. It catalyses the reaction a plastoquinone + NADH + (n+1) H(+)(in) = a plastoquinol + NAD(+) + n H(+)(out). The enzyme catalyses a plastoquinone + NADPH + (n+1) H(+)(in) = a plastoquinol + NADP(+) + n H(+)(out). NDH shuttles electrons from NAD(P)H:plastoquinone, via FMN and iron-sulfur (Fe-S) centers, to quinones in the photosynthetic chain and possibly in a chloroplast respiratory chain. The immediate electron acceptor for the enzyme in this species is believed to be plastoquinone. Couples the redox reaction to proton translocation, and thus conserves the redox energy in a proton gradient. The chain is NAD(P)H-quinone oxidoreductase subunit 1, chloroplastic from Agrostis stolonifera (Creeping bentgrass).